A 496-amino-acid chain; its full sequence is Glycerol kinase (496 aa).

Threonine 11 is a binding site for ADP. 3 residues coordinate ATP: threonine 11, threonine 12, and serine 13. Threonine 11 provides a ligand contact to sn-glycerol 3-phosphate. ADP is bound at residue arginine 15. The sn-glycerol 3-phosphate site is built by arginine 81, glutamate 82, tyrosine 133, and aspartate 242. Glycerol contacts are provided by arginine 81, glutamate 82, tyrosine 133, aspartate 242, and glutamine 243. ADP contacts are provided by threonine 264 and glycine 307. The ATP site is built by threonine 264, glycine 307, and glutamine 311. ADP is bound at residue asparagine 413.

The protein belongs to the FGGY kinase family.

It carries out the reaction glycerol + ATP = sn-glycerol 3-phosphate + ADP + H(+). Its pathway is polyol metabolism; glycerol degradation via glycerol kinase pathway; sn-glycerol 3-phosphate from glycerol: step 1/1. With respect to regulation, inhibited by fructose 1,6-bisphosphate (FBP). Functionally, key enzyme in the regulation of glycerol uptake and metabolism. Catalyzes the phosphorylation of glycerol to yield sn-glycerol 3-phosphate. In Borrelia duttonii (strain Ly), this protein is Glycerol kinase.